We begin with the raw amino-acid sequence, 276 residues long: Hydroxyethylthiazole kinase (276 aa).

Residue Met-48 coordinates substrate. Positions 124 and 175 each coordinate ATP. Gly-202 contributes to the substrate binding site.

Belongs to the Thz kinase family. Requires Mg(2+) as cofactor.

The catalysed reaction is 5-(2-hydroxyethyl)-4-methylthiazole + ATP = 4-methyl-5-(2-phosphooxyethyl)-thiazole + ADP + H(+). Its pathway is cofactor biosynthesis; thiamine diphosphate biosynthesis; 4-methyl-5-(2-phosphoethyl)-thiazole from 5-(2-hydroxyethyl)-4-methylthiazole: step 1/1. Catalyzes the phosphorylation of the hydroxyl group of 4-methyl-5-beta-hydroxyethylthiazole (THZ). The sequence is that of Hydroxyethylthiazole kinase from Clostridium beijerinckii (strain ATCC 51743 / NCIMB 8052) (Clostridium acetobutylicum).